The primary structure comprises 447 residues: Glucose-6-phosphate isomerase (447 aa).

The active-site Proton donor is E288. Active-site residues include H309 and K423.

This sequence belongs to the GPI family.

It localises to the cytoplasm. It catalyses the reaction alpha-D-glucose 6-phosphate = beta-D-fructose 6-phosphate. Its pathway is carbohydrate biosynthesis; gluconeogenesis. It participates in carbohydrate degradation; glycolysis; D-glyceraldehyde 3-phosphate and glycerone phosphate from D-glucose: step 2/4. Its function is as follows. Catalyzes the reversible isomerization of glucose-6-phosphate to fructose-6-phosphate. The protein is Glucose-6-phosphate isomerase of Lactobacillus johnsonii (strain CNCM I-12250 / La1 / NCC 533).